A 383-amino-acid polypeptide reads, in one-letter code: Deoxyguanosinetriphosphate triphosphohydrolase-like protein (383 aa).

An HD domain is found at 62 to 198 (RLTHSLEVST…AALADDISYI (137 aa)).

This sequence belongs to the dGTPase family. Type 2 subfamily.

The protein is Deoxyguanosinetriphosphate triphosphohydrolase-like protein of Rickettsia felis (strain ATCC VR-1525 / URRWXCal2) (Rickettsia azadi).